The sequence spans 154 residues: Mating pheromone 2 (154 aa).

Residues 1-16 form the signal peptide; that stretch reads MKAIFIILAILMVTQA. The propeptide occupies 17 to 52; that stretch reads FKMTSKVNTKLQSQIQSKFQSKNKLASTFQTSSQLK.

It localises to the secreted. In terms of biological role, mating ciliate pheromones (or gamones) are diffusible extracellular communication signals that distinguish different intraspecific classes of cells commonly referred to as 'mating types'. They prepare the latter for conjugation by changing their cell surface properties. The polypeptide is Mating pheromone 2 (Euplotoides octocarinatus (Freshwater ciliate)).